The primary structure comprises 105 residues: Small ribosomal subunit protein uS10 (105 aa).

This sequence belongs to the universal ribosomal protein uS10 family. In terms of assembly, part of the 30S ribosomal subunit.

In terms of biological role, involved in the binding of tRNA to the ribosomes. The polypeptide is Small ribosomal subunit protein uS10 (Synechococcus sp. (strain JA-3-3Ab) (Cyanobacteria bacterium Yellowstone A-Prime)).